A 379-amino-acid chain; its full sequence is Glutamate 5-kinase (379 aa).

Lysine 19 lines the ATP pocket. Positions 59, 146, and 158 each coordinate substrate. ATP-binding positions include 178–179 (TD) and 220–226 (TGGMATK). Positions 285 to 363 (SGDIVIDQGA…KDIISILGYD (79 aa)) constitute a PUA domain.

It belongs to the glutamate 5-kinase family.

The protein resides in the cytoplasm. The catalysed reaction is L-glutamate + ATP = L-glutamyl 5-phosphate + ADP. It functions in the pathway amino-acid biosynthesis; L-proline biosynthesis; L-glutamate 5-semialdehyde from L-glutamate: step 1/2. Functionally, catalyzes the transfer of a phosphate group to glutamate to form L-glutamate 5-phosphate. This Vibrio vulnificus (strain YJ016) protein is Glutamate 5-kinase.